The following is a 255-amino-acid chain: MKKIVTATIATAGLATIAFAGHDAQAAEQNNNGYNSNDAQSYSYTYTIDAQGNYHYTWTGNWNPSQLTQNNTYYYNNYNTYSYNNASYNNYYNHSYQYNNYTNNSQTATNNYYTGGSGASYSTTSNNVHVTTTAAPSSNGRSISNGYASGSNLYTSGQCTYYVFDRVGGKIGSTWGNASNWANAAASSGYTVNNTPKVGAIMQTTQGYYGHVAYVEGVNSNGSVRVSEMNYGHGAGVVTSRTISANQAGSYNFIH.

A signal peptide spans 1 to 26 (MKKIVTATIATAGLATIAFAGHDAQA). A run of 3 repeats spans residues 75–78 (YNNY), 88–91 (YNNY), and 98–101 (YNNY). The tract at residues 75 to 101 (YNNYNTYSYNNASYNNYYNHSYQYNNY) is 3 X 4 AA repeats of Y-N-N-Y. The Peptidase C51 domain occupies 134–255 (AAPSSNGRSI…NQAGSYNFIH (122 aa)).

It localises to the secreted. Functionally, not known; immunogenic protein. The sequence is that of Staphylococcal secretory antigen ssaA1 (ssaA1) from Staphylococcus aureus (strain MW2).